A 127-amino-acid polypeptide reads, in one-letter code: Small ribosomal subunit protein uS11 (127 aa).

Belongs to the universal ribosomal protein uS11 family. In terms of assembly, part of the 30S ribosomal subunit.

Its function is as follows. Located on the platform of the 30S subunit. The sequence is that of Small ribosomal subunit protein uS11 from Halobacterium salinarum (strain ATCC 700922 / JCM 11081 / NRC-1) (Halobacterium halobium).